The sequence spans 482 residues: Ribosomal RNA small subunit methyltransferase F (482 aa).

S-adenosyl-L-methionine contacts are provided by residues 119 to 125, E143, D170, and D188; that span reads ASAPGSK. Catalysis depends on C241, which acts as the Nucleophile.

This sequence belongs to the class I-like SAM-binding methyltransferase superfamily. RsmB/NOP family.

It is found in the cytoplasm. The catalysed reaction is cytidine(1407) in 16S rRNA + S-adenosyl-L-methionine = 5-methylcytidine(1407) in 16S rRNA + S-adenosyl-L-homocysteine + H(+). Functionally, specifically methylates the cytosine at position 1407 (m5C1407) of 16S rRNA. This Shewanella sp. (strain ANA-3) protein is Ribosomal RNA small subunit methyltransferase F.